The chain runs to 165 residues: UPF0303 protein Bcep18194_A4700 (165 aa).

The protein belongs to the UPF0303 family.

The protein is UPF0303 protein Bcep18194_A4700 of Burkholderia lata (strain ATCC 17760 / DSM 23089 / LMG 22485 / NCIMB 9086 / R18194 / 383).